Consider the following 205-residue polypeptide: dITP/XTP pyrophosphatase (205 aa).

11 to 16 (TKNMGK) serves as a coordination point for substrate. Mg(2+) is bound by residues Glu-44 and Asp-73. Asp-73 functions as the Proton acceptor in the catalytic mechanism. Substrate-binding positions include Ser-74, 158-161 (FGYD), Lys-181, and 186-187 (HR).

The protein belongs to the HAM1 NTPase family. As to quaternary structure, homodimer. The cofactor is Mg(2+).

It catalyses the reaction XTP + H2O = XMP + diphosphate + H(+). It carries out the reaction dITP + H2O = dIMP + diphosphate + H(+). The catalysed reaction is ITP + H2O = IMP + diphosphate + H(+). Pyrophosphatase that catalyzes the hydrolysis of nucleoside triphosphates to their monophosphate derivatives, with a high preference for the non-canonical purine nucleotides XTP (xanthosine triphosphate), dITP (deoxyinosine triphosphate) and ITP. Seems to function as a house-cleaning enzyme that removes non-canonical purine nucleotides from the nucleotide pool, thus preventing their incorporation into DNA/RNA and avoiding chromosomal lesions. This chain is dITP/XTP pyrophosphatase, found in Bacillus cereus (strain ATCC 14579 / DSM 31 / CCUG 7414 / JCM 2152 / NBRC 15305 / NCIMB 9373 / NCTC 2599 / NRRL B-3711).